The sequence spans 679 residues: DNA ligase (679 aa).

Residues 43–47 (DYVYD), 92–93 (SM), and Glu124 contribute to the NAD(+) site. The active-site N6-AMP-lysine intermediate is Lys126. NAD(+) contacts are provided by Arg147, Glu181, Lys297, and Lys321. Zn(2+)-binding residues include Cys415, Cys418, Cys433, and Cys438. The BRCT domain occupies 599–679 (TESAEWAGKR…RFDQAMKEEN (81 aa)).

Belongs to the NAD-dependent DNA ligase family. LigA subfamily. It depends on Mg(2+) as a cofactor. Mn(2+) serves as cofactor.

It carries out the reaction NAD(+) + (deoxyribonucleotide)n-3'-hydroxyl + 5'-phospho-(deoxyribonucleotide)m = (deoxyribonucleotide)n+m + AMP + beta-nicotinamide D-nucleotide.. DNA ligase that catalyzes the formation of phosphodiester linkages between 5'-phosphoryl and 3'-hydroxyl groups in double-stranded DNA using NAD as a coenzyme and as the energy source for the reaction. It is essential for DNA replication and repair of damaged DNA. The polypeptide is DNA ligase (Limosilactobacillus fermentum (strain NBRC 3956 / LMG 18251) (Lactobacillus fermentum)).